Reading from the N-terminus, the 273-residue chain is Undecaprenyl-diphosphatase (273 aa).

A run of 8 helical transmembrane segments spans residues 3–23, 47–67, 90–110, 120–140, 148–168, 186–206, 217–237, and 249–269; these read IILWLQAVILGLVQGMTEFLP, ALDAMQFGSVIAVLGYFWQDI, LLLGITVGTIPALAAGLLLKL, IIATMAIAMAILLGLAEQWGS, IGILDGFLVGCGQMIALLPGA, PTAARFSFLLGIPTLTIATLV, LLIPLVIATLSSMVFSYLAIA, and WVFIWYRIGLGSALWGAIALG.

The protein belongs to the UppP family.

The protein localises to the cell inner membrane. It carries out the reaction di-trans,octa-cis-undecaprenyl diphosphate + H2O = di-trans,octa-cis-undecaprenyl phosphate + phosphate + H(+). Catalyzes the dephosphorylation of undecaprenyl diphosphate (UPP). Confers resistance to bacitracin. This chain is Undecaprenyl-diphosphatase, found in Thermosynechococcus vestitus (strain NIES-2133 / IAM M-273 / BP-1).